Here is a 430-residue protein sequence, read N- to C-terminus: Tol-Pal system protein TolB (430 aa).

The N-terminal stretch at M1–A21 is a signal peptide.

Belongs to the TolB family. As to quaternary structure, the Tol-Pal system is composed of five core proteins: the inner membrane proteins TolA, TolQ and TolR, the periplasmic protein TolB and the outer membrane protein Pal. They form a network linking the inner and outer membranes and the peptidoglycan layer.

The protein localises to the periplasm. In terms of biological role, part of the Tol-Pal system, which plays a role in outer membrane invagination during cell division and is important for maintaining outer membrane integrity. TolB occupies a key intermediary position in the Tol-Pal system because it communicates directly with both membrane-embedded components, Pal in the outer membrane and TolA in the inner membrane. This chain is Tol-Pal system protein TolB, found in Enterobacter sp. (strain 638).